We begin with the raw amino-acid sequence, 242 residues long: Aspartate/glutamate leucyltransferase (242 aa).

It belongs to the R-transferase family. Bpt subfamily.

The protein resides in the cytoplasm. The enzyme catalyses N-terminal L-glutamyl-[protein] + L-leucyl-tRNA(Leu) = N-terminal L-leucyl-L-glutamyl-[protein] + tRNA(Leu) + H(+). The catalysed reaction is N-terminal L-aspartyl-[protein] + L-leucyl-tRNA(Leu) = N-terminal L-leucyl-L-aspartyl-[protein] + tRNA(Leu) + H(+). In terms of biological role, functions in the N-end rule pathway of protein degradation where it conjugates Leu from its aminoacyl-tRNA to the N-termini of proteins containing an N-terminal aspartate or glutamate. The protein is Aspartate/glutamate leucyltransferase of Alcanivorax borkumensis (strain ATCC 700651 / DSM 11573 / NCIMB 13689 / SK2).